Consider the following 438-residue polypeptide: Iroquois-class homeodomain protein IRX-6 (438 aa).

The homeobox DNA-binding region spans 143–205 (SAGRRKNATR…NARRRLKKEN (63 aa)). Disordered stretches follow at residues 205-270 (NKMT…EAAV) and 388-438 (PRDS…GAEG). Residues 214 to 223 (KGGEERKADS) show a composition bias toward basic and acidic residues. Over residues 252 to 268 (LEDLEEEEEEEEAEEEA) the composition is skewed to acidic residues.

Belongs to the TALE/IRO homeobox family. Expressed in a subset of retinal ganglion cells and bipolar cells; including in type 2 and type 3a bipolar cells.

Its subcellular location is the nucleus. Transcription factor. Binds to the iroquois binding site (IBS) motif of target genes to regulate gene expression; functions as a transcriptional activator or repressor. Modulates expression of RCVRN, VSX1, BHLHE22/BHLHB5 and TACR3/Nk3r. Required downstream of retinal bipolar cell specification for the terminal differentiation of type 2, type 3a and possibly type 6 bipolar cells. In Mus musculus (Mouse), this protein is Iroquois-class homeodomain protein IRX-6 (Irx6).